We begin with the raw amino-acid sequence, 198 residues long: Sporulation-specific protein 16 (198 aa).

Necessary for efficient spore formation. The sequence is that of Sporulation-specific protein 16 (SPO16) from Saccharomyces cerevisiae (strain ATCC 204508 / S288c) (Baker's yeast).